An 891-amino-acid chain; its full sequence is UPF0182 protein Glov_0814 (891 aa).

A run of 7 helical transmembrane segments spans residues 6–26 (LTPILFALFIIVPALTYLLAY), 51–71 (GIGVLFGGLLFAFLVPNLLYA), 102–122 (IGVLIAAGIALFVGQFGALQW), 164–184 (FMLLATLLVTLLVYYIRGGIA), 202–222 (ILLALFSCVIAAGFYLEGFGL), 244–264 (TLTTLAFITPVAGLLLAFGLW), and 266–286 (GTWRLVLLPPIVVVAAYMIGM).

This sequence belongs to the UPF0182 family.

It localises to the cell membrane. The protein is UPF0182 protein Glov_0814 of Trichlorobacter lovleyi (strain ATCC BAA-1151 / DSM 17278 / SZ) (Geobacter lovleyi).